Consider the following 436-residue polypeptide: GTPase Der (436 aa).

2 EngA-type G domains span residues 4-167 (PIVA…GEEE) and 176-351 (IRLS…ENHK). Residues 10–17 (GRPNVGKS), 57–61 (DTGGI), 119–122 (NKVD), 182–189 (GRPNVGKS), 229–233 (DTAGM), and 294–297 (NKWD) contribute to the GTP site. Residues 352–436 (KRVQSSTLNE…PIHIIARKRN (85 aa)) form the KH-like domain.

Belongs to the TRAFAC class TrmE-Era-EngA-EngB-Septin-like GTPase superfamily. EngA (Der) GTPase family. As to quaternary structure, associates with the 50S ribosomal subunit.

Functionally, GTPase that plays an essential role in the late steps of ribosome biogenesis. This chain is GTPase Der, found in Staphylococcus aureus (strain USA300).